Reading from the N-terminus, the 412-residue chain is Poly-beta-1,6-N-acetyl-D-glucosamine synthase (412 aa).

A run of 4 helical transmembrane segments spans residues 7-28 (LLFY…YFFI), 298-320 (IASI…TANI), 332-354 (IFFF…ALFI), and 364-386 (VGLI…VVIM).

It belongs to the glycosyltransferase 2 family.

It is found in the cell membrane. In terms of biological role, N-acetylglucosaminyltransferase that catalyzes the polymerization of single monomer units of UDP-N-acetylglucosamine to produce the linear homomer poly-beta-1,6-N-acetyl-D-glucosamine (PNAG, also referred to as PIA), a biofilm adhesin polysaccharide. Requires IcaD for full activity. In Staphylococcus epidermidis (strain ATCC 35984 / DSM 28319 / BCRC 17069 / CCUG 31568 / BM 3577 / RP62A), this protein is Poly-beta-1,6-N-acetyl-D-glucosamine synthase (icaA).